Here is a 168-residue protein sequence, read N- to C-terminus: Photosystem I assembly protein Ycf3 (168 aa).

3 TPR repeats span residues 35 to 68, 72 to 105, and 120 to 153; these read AFTY…EIDP, SYIL…NPFL, and GEQA…TPGN.

Belongs to the Ycf3 family.

Its subcellular location is the plastid. It is found in the chloroplast thylakoid membrane. In terms of biological role, essential for the assembly of the photosystem I (PSI) complex. May act as a chaperone-like factor to guide the assembly of the PSI subunits. The chain is Photosystem I assembly protein Ycf3 from Oenothera elata subsp. hookeri (Hooker's evening primrose).